The sequence spans 261 residues: Cytochrome c oxidase subunit 3 (261 aa).

At methionine 1–proline 15 the chain is on the mitochondrial matrix side. Residues tryptophan 16–tryptophan 34 traverse the membrane as a helical segment. The Mitochondrial intermembrane portion of the chain corresponds to phenylalanine 35–threonine 40. A helical transmembrane segment spans residues threonine 41 to threonine 66. Residues phenylalanine 67–threonine 72 lie on the Mitochondrial matrix side of the membrane. Residues proline 73 to serine 105 form a helical membrane-spanning segment. Topologically, residues leucine 106 to glutamate 128 are mitochondrial intermembrane. Residues valine 129 to methionine 152 traverse the membrane as a helical segment. Residues glutamate 153–asparagine 155 lie on the Mitochondrial matrix side of the membrane. Residues arginine 156–glutamate 183 traverse the membrane as a helical segment. Over alanine 184–aspartate 190 the chain is Mitochondrial intermembrane. The helical transmembrane segment at glycine 191–leucine 223 threads the bilayer. Over lysine 224 to histidine 232 the chain is Mitochondrial matrix. The chain crosses the membrane as a helical span at residues phenylalanine 233 to isoleucine 256. The Mitochondrial intermembrane segment spans residues tyrosine 257–serine 261.

This sequence belongs to the cytochrome c oxidase subunit 3 family. Component of the cytochrome c oxidase (complex IV, CIV), a multisubunit enzyme composed of 14 subunits. The complex is composed of a catalytic core of 3 subunits MT-CO1, MT-CO2 and MT-CO3, encoded in the mitochondrial DNA, and 11 supernumerary subunits COX4I, COX5A, COX5B, COX6A, COX6B, COX6C, COX7A, COX7B, COX7C, COX8 and NDUFA4, which are encoded in the nuclear genome. The complex exists as a monomer or a dimer and forms supercomplexes (SCs) in the inner mitochondrial membrane with NADH-ubiquinone oxidoreductase (complex I, CI) and ubiquinol-cytochrome c oxidoreductase (cytochrome b-c1 complex, complex III, CIII), resulting in different assemblies (supercomplex SCI(1)III(2)IV(1) and megacomplex MCI(2)III(2)IV(2)).

It localises to the mitochondrion inner membrane. It catalyses the reaction 4 Fe(II)-[cytochrome c] + O2 + 8 H(+)(in) = 4 Fe(III)-[cytochrome c] + 2 H2O + 4 H(+)(out). Its function is as follows. Component of the cytochrome c oxidase, the last enzyme in the mitochondrial electron transport chain which drives oxidative phosphorylation. The respiratory chain contains 3 multisubunit complexes succinate dehydrogenase (complex II, CII), ubiquinol-cytochrome c oxidoreductase (cytochrome b-c1 complex, complex III, CIII) and cytochrome c oxidase (complex IV, CIV), that cooperate to transfer electrons derived from NADH and succinate to molecular oxygen, creating an electrochemical gradient over the inner membrane that drives transmembrane transport and the ATP synthase. Cytochrome c oxidase is the component of the respiratory chain that catalyzes the reduction of oxygen to water. Electrons originating from reduced cytochrome c in the intermembrane space (IMS) are transferred via the dinuclear copper A center (CU(A)) of subunit 2 and heme A of subunit 1 to the active site in subunit 1, a binuclear center (BNC) formed by heme A3 and copper B (CU(B)). The BNC reduces molecular oxygen to 2 water molecules using 4 electrons from cytochrome c in the IMS and 4 protons from the mitochondrial matrix. The sequence is that of Cytochrome c oxidase subunit 3 (MT-CO3) from Litocranius walleri (Gerenuk).